The primary structure comprises 323 residues: Lipoyl synthase (323 aa).

Positions 61, 66, 72, 87, 91, 94, and 303 each coordinate [4Fe-4S] cluster. The Radical SAM core domain occupies 73-292 (WTKKTATFLV…EQYGLSIGIP (220 aa)).

It belongs to the radical SAM superfamily. Lipoyl synthase family. [4Fe-4S] cluster serves as cofactor.

The protein localises to the cytoplasm. The catalysed reaction is [[Fe-S] cluster scaffold protein carrying a second [4Fe-4S](2+) cluster] + N(6)-octanoyl-L-lysyl-[protein] + 2 oxidized [2Fe-2S]-[ferredoxin] + 2 S-adenosyl-L-methionine + 4 H(+) = [[Fe-S] cluster scaffold protein] + N(6)-[(R)-dihydrolipoyl]-L-lysyl-[protein] + 4 Fe(3+) + 2 hydrogen sulfide + 2 5'-deoxyadenosine + 2 L-methionine + 2 reduced [2Fe-2S]-[ferredoxin]. It functions in the pathway protein modification; protein lipoylation via endogenous pathway; protein N(6)-(lipoyl)lysine from octanoyl-[acyl-carrier-protein]: step 2/2. Catalyzes the radical-mediated insertion of two sulfur atoms into the C-6 and C-8 positions of the octanoyl moiety bound to the lipoyl domains of lipoate-dependent enzymes, thereby converting the octanoylated domains into lipoylated derivatives. This Protochlamydia amoebophila (strain UWE25) protein is Lipoyl synthase.